The chain runs to 507 residues: E3 ubiquitin-protein ligase makorin-3 (507 aa).

Over residues 1–21 (MEEPAAPSEAHEAAGAQAGAE) the composition is skewed to low complexity. Disordered stretches follow at residues 1–48 (MEEP…DSAL) and 69–89 (RGGL…PLPS). The C3H1-type 1 zinc-finger motif lies at 95-122 (WTKQIICRYYIHGQCKEGENCRYSHDLS). Positions 126–149 (MATEGGVSPPGASAGGGPSTAAHI) are disordered. Residues 238 to 265 (GSGLRFCYYASRGVCFRGESCMYLHGDI) form a C3H1-type 2 zinc finger. Residues 266–293 (CDMCGLQTLHPMDAAQREEHMRACIEAH) form a makorin-type Cys-His region. The RING-type zinc-finger motif lies at 311-365 (CGICMEVVYEKANPNDRRFGILSNCNHSFCIRCIRRWRSARQFENRIVKSCPQCR). The C3H1-type 3 zinc-finger motif lies at 394 to 423 (AMSNKACRYFAEGRGNCPFGDTCFYKHEYP).

Ubiquitous.

The protein resides in the nucleus. It carries out the reaction S-ubiquitinyl-[E2 ubiquitin-conjugating enzyme]-L-cysteine + [acceptor protein]-L-lysine = [E2 ubiquitin-conjugating enzyme]-L-cysteine + N(6)-ubiquitinyl-[acceptor protein]-L-lysine.. The protein operates within protein modification; protein ubiquitination. In terms of biological role, E3 ubiquitin ligase catalyzing the covalent attachment of ubiquitin moieties onto substrate proteins. Acts as a key developmental timer that helps ensure puberty begins at the appropriate age, by inhibiting premature activation of the reproductive hormone cascade. Epigenetically regulates GNRH1 transcription by disrupting the binding of methyl-DNA binding protein 3/MBD3 to the promoter of GNRH1. Mechanistically, mediates the non-proteolytic ubiquitination of MBD3 at multiple sites with 'Lys27' ubiquitin linkages and thereby regulates the methylation status of the genome, including GNRH1 promoter. Modulates the stability and translation of GNRH1 mRNA by mediating the non-proteolytic ubiquitination of PABP family members PABPC1, PABPC3 and PABPC4 at multiple sites. Also participates in the maintenance of genomic and epigenomic stability by regulating the abundance of APEX2 via 'Lys-48'-linked ubiquitination. The sequence is that of E3 ubiquitin-protein ligase makorin-3 (MKRN3) from Homo sapiens (Human).